Here is a 354-residue protein sequence, read N- to C-terminus: Holliday junction branch migration complex subunit RuvB (354 aa).

Positions 1-22 (MTIQTDDFAPAPPRVVSAAPAS) are disordered. Residues 5 to 193 (TDDFAPAPPR…FGIVARLEFY (189 aa)) are large ATPase domain (RuvB-L). ATP is bound by residues leucine 32, arginine 33, glycine 74, lysine 77, threonine 78, threonine 79, 140–142 (EDY), arginine 183, tyrosine 193, and arginine 230. Mg(2+) is bound at residue threonine 78. The tract at residues 194-264 (TPEELALIVR…IAHKALVMLD (71 aa)) is small ATPAse domain (RuvB-S). Residues 267 to 354 (PQGFDLMDRK…RSDGQDLFGI (88 aa)) are head domain (RuvB-H). The DNA site is built by arginine 303, arginine 322, and arginine 327.

The protein belongs to the RuvB family. Homohexamer. Forms an RuvA(8)-RuvB(12)-Holliday junction (HJ) complex. HJ DNA is sandwiched between 2 RuvA tetramers; dsDNA enters through RuvA and exits via RuvB. An RuvB hexamer assembles on each DNA strand where it exits the tetramer. Each RuvB hexamer is contacted by two RuvA subunits (via domain III) on 2 adjacent RuvB subunits; this complex drives branch migration. In the full resolvosome a probable DNA-RuvA(4)-RuvB(12)-RuvC(2) complex forms which resolves the HJ.

It is found in the cytoplasm. The catalysed reaction is ATP + H2O = ADP + phosphate + H(+). The RuvA-RuvB-RuvC complex processes Holliday junction (HJ) DNA during genetic recombination and DNA repair, while the RuvA-RuvB complex plays an important role in the rescue of blocked DNA replication forks via replication fork reversal (RFR). RuvA specifically binds to HJ cruciform DNA, conferring on it an open structure. The RuvB hexamer acts as an ATP-dependent pump, pulling dsDNA into and through the RuvAB complex. RuvB forms 2 homohexamers on either side of HJ DNA bound by 1 or 2 RuvA tetramers; 4 subunits per hexamer contact DNA at a time. Coordinated motions by a converter formed by DNA-disengaged RuvB subunits stimulates ATP hydrolysis and nucleotide exchange. Immobilization of the converter enables RuvB to convert the ATP-contained energy into a lever motion, pulling 2 nucleotides of DNA out of the RuvA tetramer per ATP hydrolyzed, thus driving DNA branch migration. The RuvB motors rotate together with the DNA substrate, which together with the progressing nucleotide cycle form the mechanistic basis for DNA recombination by continuous HJ branch migration. Branch migration allows RuvC to scan DNA until it finds its consensus sequence, where it cleaves and resolves cruciform DNA. The polypeptide is Holliday junction branch migration complex subunit RuvB (Variovorax paradoxus (strain S110)).